Consider the following 141-residue polypeptide: Hemoglobin subunit alpha-1 (141 aa).

One can recognise a Globin domain in the interval 1–141 (VLSPEDKNNV…VSTVLTSKYR (141 aa)). Position 58 (His58) interacts with O2. His87 contacts heme b.

The protein belongs to the globin family. In terms of assembly, heterotetramer of two alpha chains and two beta chains. Red blood cells.

Functionally, involved in oxygen transport from the lung to the various peripheral tissues. In Tadarida brasiliensis (Brazilian free-tailed bat), this protein is Hemoglobin subunit alpha-1.